We begin with the raw amino-acid sequence, 341 residues long: Outer membrane protein U (341 aa).

The signal sequence occupies residues 1-21; it reads MNKTLIALAVSAAAVATGAYA.

It belongs to the Gram-negative porin family. As to quaternary structure, homotrimer.

The protein resides in the cell outer membrane. In terms of biological role, forms pores that allow passive diffusion of small molecules across the outer membrane. The chain is Outer membrane protein U (ompU) from Vibrio cholerae serotype O1 (strain ATCC 39315 / El Tor Inaba N16961).